An 850-amino-acid polypeptide reads, in one-letter code: Protein monoglycylase TTLL8 (850 aa).

Disordered regions lie at residues Met-1–Ser-29 and Arg-228–Asn-254. The 359-residue stretch at Ser-222–Glu-580 folds into the TTL domain. ATP is bound by residues Lys-354, Arg-360–Gly-361, Gln-392–Ile-395, Lys-405–Asp-407, and Cys-449–Asn-450. Position 360 (Arg-360) interacts with a protein. Residues Asp-527, Glu-540, and Asn-542 each coordinate Mg(2+). Glu-540 lines the ATP pocket. Positions Ala-627–Arg-652 are disordered.

It depends on Mg(2+) as a cofactor.

The protein resides in the cytoplasm. It is found in the cytoskeleton. The protein localises to the cell projection. It localises to the cilium. Its subcellular location is the cilium axoneme. The protein resides in the flagellum axoneme. The catalysed reaction is L-glutamyl-[protein] + glycine + ATP = glycyl-L-glutamyl-[protein] + ADP + phosphate + H(+). Its function is as follows. Monoglycylase which modifies both tubulin and non-tubulin proteins, adding a single glycine to the gamma-carboxyl groups of specific glutamate residues to generate monoglycine side chains within the C-terminal tail of target proteins. Not involved in elongation step of the polyglycylation reaction. Preferentially monoglycylates alpha-tubulin over beta-tubulin. Together with TTLL3, mediates microtubule glycylation of primary and motile cilia, which is essential for their stability and maintenance. Together with TTLL3, glycylates sperm flagella which regulates axonemal dynein motor activity, thereby controlling flagellar beat, directional sperm swimming and male fertility. Monoglycylates non-tubulin proteins such as ANP32A, ANP32B, SET, NCL and NAP1. This is Protein monoglycylase TTLL8 from Homo sapiens (Human).